We begin with the raw amino-acid sequence, 276 residues long: Large ribosomal subunit protein uL2 (276 aa).

The interval 223 to 276 (GSAMNPVDHPHGGGEGKAPIGHPGPLTPWGKPTLGYKTRKKNKPSDKFIVKRRK) is disordered. A compositionally biased stretch (basic and acidic residues) spans 265-276 (KPSDKFIVKRRK).

Belongs to the universal ribosomal protein uL2 family. As to quaternary structure, part of the 50S ribosomal subunit. Forms a bridge to the 30S subunit in the 70S ribosome.

One of the primary rRNA binding proteins. Required for association of the 30S and 50S subunits to form the 70S ribosome, for tRNA binding and peptide bond formation. It has been suggested to have peptidyltransferase activity; this is somewhat controversial. Makes several contacts with the 16S rRNA in the 70S ribosome. The chain is Large ribosomal subunit protein uL2 from Caldicellulosiruptor saccharolyticus (strain ATCC 43494 / DSM 8903 / Tp8T 6331).